Consider the following 152-residue polypeptide: Cytosolic calcium-binding protein 1 (152 aa).

7 consecutive repeat copies span residues 57–62, 67–71, 78–82, 104–108, 112–116, 124–129, and 131–136. A 7 X 5 AA approximate repeats of V-E-E-K-K region spans residues 57 to 136; that stretch reads VEETEKPIEE…EKKPEAEEEK (80 aa). Residues 60–152 form a disordered region; the sequence is TEKPIEETEE…VTAPVEKADE (93 aa). Positions 96–138 are enriched in basic and acidic residues; that stretch reads DESKTEEVVEAKKEEEVEEKKTEEAPVVVEEEKKPEAEEEKPA.

As to expression, predominantly expressed in petioles (at protein level). Mainly observed in shoots, flowers, siliques and roots, and, to a lower extent, in stems and leaves.

It localises to the cytoplasm. It is found in the cytosol. Binds calcium Ca(2+) and may act as a signal mediator to buffer Ca(2+). The sequence is that of Cytosolic calcium-binding protein 1 from Arabidopsis thaliana (Mouse-ear cress).